Consider the following 320-residue polypeptide: Arylacetonitrilase (320 aa).

The CN hydrolase domain maps to 5–286 (IKASVVQAST…EGVISAELDL (282 aa)). Residue Glu-46 is the Proton acceptor of the active site. The active site involves Lys-133. Cys-178 functions as the Nucleophile in the catalytic mechanism.

The protein belongs to the carbon-nitrogen hydrolase superfamily. Nitrilase family.

The enzyme catalyses a nitrile + 2 H2O = a carboxylate + NH4(+). Its function is as follows. Nitrilase that hydrolyzes preferentially fumaronitrile, while 3-phenylpropionitrile, beta-cyano-L-alanine and 4-cyanopyridine are transformed at much lower rates. This chain is Arylacetonitrilase (nit), found in Trametes versicolor (strain FP-101664) (White-rot fungus).